Here is a 435-residue protein sequence, read N- to C-terminus: Bystin (435 aa).

The tract at residues 1 to 102 is disordered; the sequence is MPKFKAARGA…VPQDGSDDEE (102 aa). Omega-N-methylarginine is present on arginine 40. Residues 71–87 are compositionally biased toward basic and acidic residues; it reads AEHGSGDRPAVPRERTT. A Phosphoserine modification is found at serine 98. Position 154 is a phosphothreonine (threonine 154). 2 positions are modified to phosphoserine: serine 165 and serine 412.

The protein belongs to the bystin family. Binds trophinin, tastin and cytokeratins.

The protein localises to the cytoplasm. Its subcellular location is the nucleus. It localises to the nucleolus. Required for processing of 20S pre-rRNA precursor and biogenesis of 40S ribosomal subunits. The sequence is that of Bystin (BYSL) from Bos taurus (Bovine).